The following is a 968-amino-acid chain: Isoleucine--tRNA ligase (968 aa).

Positions 68–78 match the 'HIGH' region motif; sequence PYANGALHMGH. Glu-582 is an L-isoleucyl-5'-AMP binding site. A 'KMSKS' region motif is present at residues 623 to 627; that stretch reads KMSKS. An ATP-binding site is contributed by Lys-626. Residues Cys-936, Cys-939, Cys-956, and Cys-959 each contribute to the Zn(2+) site.

It belongs to the class-I aminoacyl-tRNA synthetase family. IleS type 1 subfamily. As to quaternary structure, monomer. Zn(2+) serves as cofactor.

It is found in the cytoplasm. It carries out the reaction tRNA(Ile) + L-isoleucine + ATP = L-isoleucyl-tRNA(Ile) + AMP + diphosphate. In terms of biological role, catalyzes the attachment of isoleucine to tRNA(Ile). As IleRS can inadvertently accommodate and process structurally similar amino acids such as valine, to avoid such errors it has two additional distinct tRNA(Ile)-dependent editing activities. One activity is designated as 'pretransfer' editing and involves the hydrolysis of activated Val-AMP. The other activity is designated 'posttransfer' editing and involves deacylation of mischarged Val-tRNA(Ile). In Prochlorococcus marinus (strain MIT 9312), this protein is Isoleucine--tRNA ligase.